Here is a 141-residue protein sequence, read N- to C-terminus: Flagellar assembly factor FliW (141 aa).

This sequence belongs to the FliW family. Interacts with translational regulator CsrA and flagellin(s).

It is found in the cytoplasm. Acts as an anti-CsrA protein, binds CsrA and prevents it from repressing translation of its target genes, one of which is flagellin. Binds to flagellin and participates in the assembly of the flagellum. This Clostridium acetobutylicum (strain ATCC 824 / DSM 792 / JCM 1419 / IAM 19013 / LMG 5710 / NBRC 13948 / NRRL B-527 / VKM B-1787 / 2291 / W) protein is Flagellar assembly factor FliW.